The chain runs to 253 residues: 5'/3'-nucleotidase SurE (253 aa).

Residues aspartate 8, aspartate 9, serine 39, and asparagine 92 each coordinate a divalent metal cation.

Belongs to the SurE nucleotidase family. A divalent metal cation is required as a cofactor.

The protein resides in the cytoplasm. It carries out the reaction a ribonucleoside 5'-phosphate + H2O = a ribonucleoside + phosphate. The enzyme catalyses a ribonucleoside 3'-phosphate + H2O = a ribonucleoside + phosphate. The catalysed reaction is [phosphate](n) + H2O = [phosphate](n-1) + phosphate + H(+). Nucleotidase with a broad substrate specificity as it can dephosphorylate various ribo- and deoxyribonucleoside 5'-monophosphates and ribonucleoside 3'-monophosphates with highest affinity to 3'-AMP. Also hydrolyzes polyphosphate (exopolyphosphatase activity) with the preference for short-chain-length substrates (P20-25). Might be involved in the regulation of dNTP and NTP pools, and in the turnover of 3'-mononucleotides produced by numerous intracellular RNases (T1, T2, and F) during the degradation of various RNAs. The chain is 5'/3'-nucleotidase SurE from Sodalis glossinidius (strain morsitans).